The sequence spans 150 residues: Lipoprotein signal peptidase (150 aa).

Transmembrane regions (helical) follow at residues 5–25 (LSLV…NWVV), 59–79 (QQWF…WFLW), and 83–103 (GQNW…GNFI). Catalysis depends on residues Asp-113 and Asp-129. The chain crosses the membrane as a helical span at residues 124 to 144 (IFNIADILLSVGFVVLFIAIL).

This sequence belongs to the peptidase A8 family.

The protein resides in the cell membrane. The enzyme catalyses Release of signal peptides from bacterial membrane prolipoproteins. Hydrolyzes -Xaa-Yaa-Zaa-|-(S,diacylglyceryl)Cys-, in which Xaa is hydrophobic (preferably Leu), and Yaa (Ala or Ser) and Zaa (Gly or Ala) have small, neutral side chains.. Its pathway is protein modification; lipoprotein biosynthesis (signal peptide cleavage). Its function is as follows. This protein specifically catalyzes the removal of signal peptides from prolipoproteins. This Lactococcus lactis subsp. cremoris (strain MG1363) protein is Lipoprotein signal peptidase.